The primary structure comprises 360 residues: Mitogen-activated protein kinase 1 (360 aa).

Residue A2 is modified to N-acetylalanine. Positions 25 to 313 (YTNLSYIGEG…VEQALAHPYL (289 aa)) constitute a Protein kinase domain. S29 is subject to Phosphoserine; by SGK1. ATP-binding positions include 31–39 (IGEGAYGMV) and K54. The active-site Proton acceptor is the D149. Phosphothreonine; by MAP2K1 and MAP2K2 is present on T185. The TXY motif lies at 185–187 (TEY). Residue Y187 is modified to Phosphotyrosine; by MAP2K1 and MAP2K2. A Phosphothreonine; by autocatalysis modification is found at T190. A phosphoserine mark is found at S246 and S248. The DNA-binding element occupies 259-277 (KARNYLLSLPHKNKVPWNR). S284 carries the phosphoserine modification. Residues 318–322 (DPSDE) carry the Cytoplasmic retention motif motif. Residues 327 to 333 (APFKFDM) carry the Nuclear translocation motif motif.

The protein belongs to the protein kinase superfamily. CMGC Ser/Thr protein kinase family. MAP kinase subfamily. Binds both upstream activators and downstream substrates in multimolecular complexes. This interaction inhibits its tyrosine-kinase activity. Interacts with ADAM15, ARHGEF2, ARRB2, DAPK1 (via death domain), HSF4, IER3, IPO7, NISCH, SGK1, and isoform 1 of NEK2. Interacts (via phosphorylated form) with TPR (via C-terminal region and phosphorylated form); the interaction requires dimerization of MAPK1/ERK2 and increases following EGF stimulation. Interacts with MAP2K1. Interacts with DUSP6. Interacts (phosphorylated form) with CAV2 ('Tyr-19'-phosphorylated form); the interaction, promoted by insulin, leads to nuclear location and MAPK1 activation. Interacts with MORG1, PEA15 and MKNK2. MKNK2 isoform 1 binding prevents from dephosphorylation and inactivation. Interacts with DCC. The phosphorylated form interacts with PML (isoform PML-4). Interacts with STYX. Interacts with CDK2AP2. Interacts with CAVIN4. Interacts with DUSP7; the interaction enhances DUSP7 phosphatase activity. Interacts with GIT1; this interaction is necessary for MAPK1 localization to focal adhesions. Interacts with ZNF263. Interacts with phosphoglycerate kinase PGK1; the interaction is direct, occurs under hypoxic conditions, and promotes interaction between PGK1 and PIN1. In terms of assembly, (Microbial infection) Interacts with HIV-1 Nef through its SH3 domain. It depends on Mg(2+) as a cofactor. Phosphorylated upon KIT and FLT3 signaling. Dually phosphorylated on Thr-185 and Tyr-187, which activates the enzyme. Undergoes regulatory phosphorylation on additional residues such as Ser-246 and Ser-248 in the kinase insert domain (KID) These phosphorylations, which are probably mediated by more than one kinase, are important for binding of MAPK1/ERK2 to importin-7 (IPO7) and its nuclear translocation. In addition, autophosphorylation of Thr-190 was shown to affect the subcellular localization of MAPK1/ERK2 as well. Ligand-activated ALK induces tyrosine phosphorylation. Dephosphorylated by PTPRJ at Tyr-187. Phosphorylation on Ser-29 by SGK1 results in its activation by enhancing its interaction with MAP2K1/MEK1 and MAP2K2/MEK2. DUSP3 and DUSP6 dephosphorylate specifically MAPK1/ERK2 and MAPK3/ERK1 whereas DUSP9 dephosphorylates a broader range of MAPKs. Dephosphorylated by DUSP1 and DUSP2 at Thr-185 and Tyr-187. In terms of processing, ISGylated. Post-translationally, ubiquitinated by TRIM15 via 'Lys-63'-linked ubiquitination; leading to activation. Deubiquitinated by CYLD.

The protein localises to the cytoplasm. It is found in the cytoskeleton. The protein resides in the spindle. Its subcellular location is the nucleus. It localises to the microtubule organizing center. The protein localises to the centrosome. It is found in the membrane. The protein resides in the caveola. Its subcellular location is the cell junction. It localises to the focal adhesion. It carries out the reaction L-seryl-[protein] + ATP = O-phospho-L-seryl-[protein] + ADP + H(+). The catalysed reaction is L-threonyl-[protein] + ATP = O-phospho-L-threonyl-[protein] + ADP + H(+). Its activity is regulated as follows. Phosphorylated by MAP2K1/MEK1 and MAP2K2/MEK2 on Thr-185 and Tyr-187 in response to external stimuli like insulin or NGF. Both phosphorylations are required for activity. This phosphorylation causes dramatic conformational changes, which enable full activation and interaction of MAPK1/ERK2 with its substrates. Phosphorylation on Ser-29 by SGK1 results in its activation by enhancing its interaction with MAP2K1/MEK1 and MAP2K2/MEK2. Dephosphorylated and inactivated by DUSP1, DUSP3, DUSP6 and DUSP9. Inactivated by pyrimidylpyrrole inhibitors. In terms of biological role, serine/threonine kinase which acts as an essential component of the MAP kinase signal transduction pathway. MAPK1/ERK2 and MAPK3/ERK1 are the 2 MAPKs which play an important role in the MAPK/ERK cascade. They participate also in a signaling cascade initiated by activated KIT and KITLG/SCF. Depending on the cellular context, the MAPK/ERK cascade mediates diverse biological functions such as cell growth, adhesion, survival and differentiation through the regulation of transcription, translation, cytoskeletal rearrangements. The MAPK/ERK cascade also plays a role in initiation and regulation of meiosis, mitosis, and postmitotic functions in differentiated cells by phosphorylating a number of transcription factors. About 160 substrates have already been discovered for ERKs. Many of these substrates are localized in the nucleus, and seem to participate in the regulation of transcription upon stimulation. However, other substrates are found in the cytosol as well as in other cellular organelles, and those are responsible for processes such as translation, mitosis and apoptosis. Moreover, the MAPK/ERK cascade is also involved in the regulation of the endosomal dynamics, including lysosome processing and endosome cycling through the perinuclear recycling compartment (PNRC); as well as in the fragmentation of the Golgi apparatus during mitosis. The substrates include transcription factors (such as ATF2, BCL6, ELK1, ERF, FOS, HSF4 or SPZ1), cytoskeletal elements (such as CANX, CTTN, GJA1, MAP2, MAPT, PXN, SORBS3 or STMN1), regulators of apoptosis (such as BAD, BTG2, CASP9, DAPK1, IER3, MCL1 or PPARG), regulators of translation (such as EIF4EBP1 and FXR1) and a variety of other signaling-related molecules (like ARHGEF2, DCC, FRS2 or GRB10). Protein kinases (such as RAF1, RPS6KA1/RSK1, RPS6KA3/RSK2, RPS6KA2/RSK3, RPS6KA6/RSK4, SYK, MKNK1/MNK1, MKNK2/MNK2, RPS6KA5/MSK1, RPS6KA4/MSK2, MAPKAPK3 or MAPKAPK5) and phosphatases (such as DUSP1, DUSP4, DUSP6 or DUSP16) are other substrates which enable the propagation the MAPK/ERK signal to additional cytosolic and nuclear targets, thereby extending the specificity of the cascade. Mediates phosphorylation of TPR in response to EGF stimulation. May play a role in the spindle assembly checkpoint. Phosphorylates PML and promotes its interaction with PIN1, leading to PML degradation. Phosphorylates CDK2AP2. Phosphorylates phosphoglycerate kinase PGK1 under hypoxic conditions to promote its targeting to the mitochondrion and suppress the formation of acetyl-coenzyme A from pyruvate. Acts as a transcriptional repressor. Binds to a [GC]AAA[GC] consensus sequence. Repress the expression of interferon gamma-induced genes. Seems to bind to the promoter of CCL5, DMP1, IFIH1, IFITM1, IRF7, IRF9, LAMP3, OAS1, OAS2, OAS3 and STAT1. Transcriptional activity is independent of kinase activity. The sequence is that of Mitogen-activated protein kinase 1 from Homo sapiens (Human).